Consider the following 159-residue polypeptide: Crossover junction endodeoxyribonuclease RuvC (159 aa).

Catalysis depends on residues D7, E67, and D139. Mg(2+) is bound by residues D7, E67, and D139.

It belongs to the RuvC family. As to quaternary structure, homodimer which binds Holliday junction (HJ) DNA. The HJ becomes 2-fold symmetrical on binding to RuvC with unstacked arms; it has a different conformation from HJ DNA in complex with RuvA. In the full resolvosome a probable DNA-RuvA(4)-RuvB(12)-RuvC(2) complex forms which resolves the HJ. Mg(2+) serves as cofactor.

It is found in the cytoplasm. The enzyme catalyses Endonucleolytic cleavage at a junction such as a reciprocal single-stranded crossover between two homologous DNA duplexes (Holliday junction).. Functionally, the RuvA-RuvB-RuvC complex processes Holliday junction (HJ) DNA during genetic recombination and DNA repair. Endonuclease that resolves HJ intermediates. Cleaves cruciform DNA by making single-stranded nicks across the HJ at symmetrical positions within the homologous arms, yielding a 5'-phosphate and a 3'-hydroxyl group; requires a central core of homology in the junction. The consensus cleavage sequence is 5'-(A/T)TT(C/G)-3'. Cleavage occurs on the 3'-side of the TT dinucleotide at the point of strand exchange. HJ branch migration catalyzed by RuvA-RuvB allows RuvC to scan DNA until it finds its consensus sequence, where it cleaves and resolves the cruciform DNA. The protein is Crossover junction endodeoxyribonuclease RuvC of Thermosynechococcus vestitus (strain NIES-2133 / IAM M-273 / BP-1).